The following is a 368-amino-acid chain: Anti-sigma-X factor RsiX (368 aa).

Over residues glutamine 73–lysine 87 the composition is skewed to polar residues. The tract at residues glutamine 73–aspartate 101 is disordered.

It is found in the cell membrane. In terms of biological role, the anti-sigma factor for extracytoplasmic function (ECF) sigma factor SigX, inhibits SigX activity and stabilizes it. The chain is Anti-sigma-X factor RsiX (rsiX) from Bacillus subtilis (strain 168).